The sequence spans 479 residues: Adenosylhomocysteinase (479 aa).

Residues Thr-66, Asp-142, and Glu-203 each contribute to the substrate site. 204-206 is an NAD(+) binding site; sequence TTT. Positions 233 and 237 each coordinate substrate. NAD(+) contacts are provided by residues Asn-238, 267 to 272, Glu-290, Asn-325, 346 to 348, and Asn-394; these read GYGDVG and IGH.

The protein belongs to the adenosylhomocysteinase family. NAD(+) serves as cofactor.

The protein localises to the cytoplasm. It catalyses the reaction S-adenosyl-L-homocysteine + H2O = L-homocysteine + adenosine. The protein operates within amino-acid biosynthesis; L-homocysteine biosynthesis; L-homocysteine from S-adenosyl-L-homocysteine: step 1/1. Functionally, may play a key role in the regulation of the intracellular concentration of adenosylhomocysteine. The protein is Adenosylhomocysteinase of Nitratidesulfovibrio vulgaris (strain ATCC 29579 / DSM 644 / CCUG 34227 / NCIMB 8303 / VKM B-1760 / Hildenborough) (Desulfovibrio vulgaris).